Reading from the N-terminus, the 242-residue chain is Uridylate kinase (242 aa).

11–14 (KLSG) contributes to the ATP binding site. The segment at 19–24 (GDKGVG) is involved in allosteric activation by GTP. G53 is a UMP binding site. 2 residues coordinate ATP: G54 and R58. Residues D73 and 134–141 (IGSPYFST) contribute to the UMP site. ATP contacts are provided by N162, Y168, and D171.

Belongs to the UMP kinase family. In terms of assembly, homohexamer.

It localises to the cytoplasm. The catalysed reaction is UMP + ATP = UDP + ADP. The protein operates within pyrimidine metabolism; CTP biosynthesis via de novo pathway; UDP from UMP (UMPK route): step 1/1. With respect to regulation, allosterically activated by GTP. Inhibited by UTP. In terms of biological role, catalyzes the reversible phosphorylation of UMP to UDP. The sequence is that of Uridylate kinase from Streptococcus agalactiae serotype Ia (strain ATCC 27591 / A909 / CDC SS700).